Consider the following 100-residue polypeptide: uncharacterized protein (100 aa).

The chain crosses the membrane as a helical span at residues 13–32 (IWSSLNIICLMVTFLNVQLS).

It is found in the mitochondrion membrane. This is an uncharacterized protein from Schizosaccharomyces pombe (strain 972 / ATCC 24843) (Fission yeast).